We begin with the raw amino-acid sequence, 364 residues long: Triacylglycerol lipase (364 aa).

An N-terminal signal peptide occupies residues 1–44 (MARTMRSRVVAGAVACAMSIAPFAGTTAVMTLATTHAAMAATAP). The AB hydrolase-1 domain occupies 54 to 266 (PIILVHGLSG…AIQPTLSVFG (213 aa)). Residue L61 participates in substrate binding. S131 acts as the Nucleophile in catalysis. Q132 serves as a coordination point for substrate. A disulfide bridge links C234 with C314. Ca(2+) is bound at residue D286. Active-site charge relay system residues include D308 and H330. Ca(2+)-binding residues include D332, Q336, and V340.

The protein belongs to the AB hydrolase superfamily. Pseudomonas lipase family. In terms of assembly, monomer. Ca(2+) serves as cofactor.

The protein localises to the secreted. The enzyme catalyses a triacylglycerol + H2O = a diacylglycerol + a fatty acid + H(+). With respect to regulation, inhibited by RC-(Rp,Sp)- and SC-(Rp,Sp)-1,2-dioctylcarbamoylglycero-3-O-p-nitrophenyl octylphosphonate. Also inhibited by diethyl-p-nitrophenylphosphate (E600). Functionally, catalyzes the hydrolysis of triacylglycerol. It shows a preference for triacylglycerols with a chain length between 6 and 12 carbons. This Burkholderia cepacia (Pseudomonas cepacia) protein is Triacylglycerol lipase.